The following is a 259-amino-acid chain: Isoprenyl transferase (259 aa).

Asp-33 is an active-site residue. A Mg(2+)-binding site is contributed by Asp-33. Residues Gly-34–Arg-37, Trp-38, His-51, and Ser-79–Glu-81 contribute to the substrate site. Asn-82 acts as the Proton acceptor in catalysis. Substrate-binding positions include Arg-86, Arg-208, and Arg-214 to Ser-216. Glu-227 contacts Mg(2+).

This sequence belongs to the UPP synthase family. As to quaternary structure, homodimer. Mg(2+) serves as cofactor.

Its function is as follows. Catalyzes the condensation of isopentenyl diphosphate (IPP) with allylic pyrophosphates generating different type of terpenoids. The protein is Isoprenyl transferase of Streptomyces fradiae (Streptomyces roseoflavus).